We begin with the raw amino-acid sequence, 304 residues long: UDP-3-O-acyl-N-acetylglucosamine deacetylase (304 aa).

Positions 78, 237, and 241 each coordinate Zn(2+). The active-site Proton donor is the H264.

The protein belongs to the LpxC family. Zn(2+) serves as cofactor.

It catalyses the reaction a UDP-3-O-[(3R)-3-hydroxyacyl]-N-acetyl-alpha-D-glucosamine + H2O = a UDP-3-O-[(3R)-3-hydroxyacyl]-alpha-D-glucosamine + acetate. Its pathway is glycolipid biosynthesis; lipid IV(A) biosynthesis; lipid IV(A) from (3R)-3-hydroxytetradecanoyl-[acyl-carrier-protein] and UDP-N-acetyl-alpha-D-glucosamine: step 2/6. Its function is as follows. Catalyzes the hydrolysis of UDP-3-O-myristoyl-N-acetylglucosamine to form UDP-3-O-myristoylglucosamine and acetate, the committed step in lipid A biosynthesis. This is UDP-3-O-acyl-N-acetylglucosamine deacetylase from Acidithiobacillus ferrooxidans (strain ATCC 53993 / BNL-5-31) (Leptospirillum ferrooxidans (ATCC 53993)).